A 445-amino-acid chain; its full sequence is Na(+)-translocating NADH-quinone reductase subunit A (445 aa).

Belongs to the NqrA family. Composed of six subunits; NqrA, NqrB, NqrC, NqrD, NqrE and NqrF.

The enzyme catalyses a ubiquinone + n Na(+)(in) + NADH + H(+) = a ubiquinol + n Na(+)(out) + NAD(+). NQR complex catalyzes the reduction of ubiquinone-1 to ubiquinol by two successive reactions, coupled with the transport of Na(+) ions from the cytoplasm to the periplasm. NqrA to NqrE are probably involved in the second step, the conversion of ubisemiquinone to ubiquinol. This Marinomonas sp. (strain MWYL1) protein is Na(+)-translocating NADH-quinone reductase subunit A.